The primary structure comprises 166 residues: Interferon gamma (166 aa).

Residues 1 to 23 (MNYTSYILAFQLCVILGSSGCYC) form the signal peptide. Q24 carries the pyrrolidone carboxylic acid modification. Residues N39 and N106 are each glycosylated (N-linked (GlcNAc...) asparagine). The tract at residues 147-166 (SNLRKRKRRQNQIQGRRASK) is disordered.

This sequence belongs to the type II (or gamma) interferon family. As to quaternary structure, homodimer. Interacts with IFNGR1 (via extracellular domain); this interaction promotes IFNGR1 dimerization. As to expression, released primarily from activated T lymphocytes.

The protein localises to the secreted. In terms of biological role, type II interferon produced by immune cells such as T-cells and NK cells that plays crucial roles in antimicrobial, antiviral, and antitumor responses by activating effector immune cells and enhancing antigen presentation. Primarily signals through the JAK-STAT pathway after interaction with its receptor IFNGR1 to affect gene regulation. Upon IFNG binding, IFNGR1 intracellular domain opens out to allow association of downstream signaling components JAK2, JAK1 and STAT1, leading to STAT1 activation, nuclear translocation and transcription of IFNG-regulated genes. Many of the induced genes are transcription factors such as IRF1 that are able to further drive regulation of a next wave of transcription. Plays a role in class I antigen presentation pathway by inducing a replacement of catalytic proteasome subunits with immunoproteasome subunits. In turn, increases the quantity, quality, and repertoire of peptides for class I MHC loading. Increases the efficiency of peptide generation also by inducing the expression of activator PA28 that associates with the proteasome and alters its proteolytic cleavage preference. Up-regulates as well MHC II complexes on the cell surface by promoting expression of several key molecules such as cathepsins B/CTSB, H/CTSH, and L/CTSL. Participates in the regulation of hematopoietic stem cells during development and under homeostatic conditions by affecting their development, quiescence, and differentiation. The polypeptide is Interferon gamma (IFNG) (Lama glama (Llama)).